A 233-amino-acid chain; its full sequence is Probable septum site-determining protein MinC (233 aa).

A disordered region spans residues 104–124 (QKMATPEPAPAPAPVVDPNAP).

This sequence belongs to the MinC family. In terms of assembly, interacts with MinD and FtsZ.

Its function is as follows. Cell division inhibitor that blocks the formation of polar Z ring septums. Rapidly oscillates between the poles of the cell to destabilize FtsZ filaments that have formed before they mature into polar Z rings. Prevents FtsZ polymerization. This is Probable septum site-determining protein MinC from Serratia proteamaculans (strain 568).